Consider the following 736-residue polypeptide: Catalase-peroxidase (736 aa).

Positions methionine 1–alanine 10 are enriched in basic and acidic residues. A disordered region spans residues methionine 1 to aspartate 26. A cross-link (tryptophyl-tyrosyl-methioninium (Trp-Tyr) (with M-244)) is located at residues tryptophan 96–tyrosine 218. Residue histidine 97 is the Proton acceptor of the active site. Positions tyrosine 218–methionine 244 form a cross-link, tryptophyl-tyrosyl-methioninium (Tyr-Met) (with W-96). Histidine 259 is a binding site for heme b.

Belongs to the peroxidase family. Peroxidase/catalase subfamily. As to quaternary structure, homodimer or homotetramer. Requires heme b as cofactor. In terms of processing, formation of the three residue Trp-Tyr-Met cross-link is important for the catalase, but not the peroxidase activity of the enzyme.

The catalysed reaction is H2O2 + AH2 = A + 2 H2O. The enzyme catalyses 2 H2O2 = O2 + 2 H2O. Its function is as follows. Bifunctional enzyme with both catalase and broad-spectrum peroxidase activity. The protein is Catalase-peroxidase of Rhodopseudomonas palustris (strain ATCC BAA-98 / CGA009).